We begin with the raw amino-acid sequence, 688 residues long: Eukaryotic translation initiation factor 3 subunit B (688 aa).

Residues 1-32 form a disordered region; sequence MAKKKGENYDSDGGDDQDYDEEPNFDDPEGFV. The segment covering 9 to 32 has biased composition (acidic residues); sequence YDSDGGDDQDYDEEPNFDDPEGFV. Residues 57 to 141 form the RRM domain; that stretch reads NVIVVDNIPV…HTLLVNLFSD (85 aa). WD repeat units lie at residues 208 to 246, 247 to 287, 291 to 329, 332 to 367, 440 to 482, and 527 to 572; these read RDRF…KINK, FPHS…EKRS, DGTS…LLDK, IKVQ…TLLE, EVKE…EPTM, and GDHF…KRVN. Positions 613–642 form a coiled coil; the sequence is RIRMTRASKELLEKRAKLREQFVEYRTKRV.

The protein belongs to the eIF-3 subunit B family. As to quaternary structure, component of the eukaryotic translation initiation factor 3 (eIF-3) complex.

The protein resides in the cytoplasm. Functionally, RNA-binding component of the eukaryotic translation initiation factor 3 (eIF-3) complex, which is involved in protein synthesis of a specialized repertoire of mRNAs and, together with other initiation factors, stimulates binding of mRNA and methionyl-tRNAi to the 40S ribosome. The eIF-3 complex specifically targets and initiates translation of a subset of mRNAs involved in cell proliferation. This chain is Eukaryotic translation initiation factor 3 subunit B, found in Aedes aegypti (Yellowfever mosquito).